Consider the following 535-residue polypeptide: Intercellular adhesion molecule 1 (535 aa).

Residues M1 to A27 form the signal peptide. The Extracellular segment spans residues G28–L480. Residues G41–A102 form the Ig-like C2-type 1 domain. N-linked (GlcNAc...) asparagine glycosylation occurs at N47. 2 disulfide bridges follow: C48–C91 and C52–C95. N-linked (GlcNAc...) asparagine glycosylation is found at N105 and N131. Residues G127–R193 enclose the Ig-like C2-type 2 domain. A disulfide bridge connects residues C134 and C186. Positions R151–E153 match the Cell attachment site; atypical motif. Residues N183, N202, N236, N262, N302, N341, N357, N366, N404, and N428 are each glycosylated (N-linked (GlcNAc...) asparagine). Positions G230 to V295 constitute an Ig-like C2-type 3 domain. C237 and C288 are disulfide-bonded. Residues W323–A376 form the Ig-like C2-type 4 domain. Intrachain disulfides connect C330-C369, C401-C417, C417-C456, and C429-C456. The region spanning G410–G463 is the Ig-like C2-type 5 domain. The chain crosses the membrane as a helical span at residues D481–Y503. Over N504 to P535 the chain is Cytoplasmic. T533 bears the Phosphothreonine mark.

The protein belongs to the immunoglobulin superfamily. ICAM family. In terms of assembly, homodimer. Interacts with MUC1 and promotes cell aggregation in epithelial cells. Interacts with ARHGEF26/SGEF. Interacts (on T cell side) with CD81, CD247 and CD9 at immunological synapses between antigen-presenting cells and T cells. Post-translationally, monoubiquitinated, which is promoted by MARCH9 and leads to endocytosis.

It localises to the membrane. ICAM proteins are ligands for the leukocyte adhesion protein LFA-1 (integrin alpha-L/beta-2). During leukocyte trans-endothelial migration, ICAM1 engagement promotes the assembly of endothelial apical cups through ARHGEF26/SGEF and RHOG activation. The polypeptide is Intercellular adhesion molecule 1 (ICAM1) (Bos taurus (Bovine)).